Consider the following 303-residue polypeptide: Pseudouridine-5'-phosphate glycosidase (303 aa).

Glu-24 (proton donor) is an active-site residue. Lys-85 and Val-105 together coordinate substrate. Asp-137 lines the Mn(2+) pocket. A substrate-binding site is contributed by 139–141 (SAD). Residue Lys-158 is the Nucleophile of the active site.

It belongs to the pseudouridine-5'-phosphate glycosidase family. As to quaternary structure, homotrimer. It depends on Mn(2+) as a cofactor.

It carries out the reaction D-ribose 5-phosphate + uracil = psi-UMP + H2O. Catalyzes the reversible cleavage of pseudouridine 5'-phosphate (PsiMP) to ribose 5-phosphate and uracil. Functions biologically in the cleavage direction, as part of a pseudouridine degradation pathway. In Herpetosiphon aurantiacus (strain ATCC 23779 / DSM 785 / 114-95), this protein is Pseudouridine-5'-phosphate glycosidase.